The sequence spans 180 residues: ATP-dependent protease subunit HslV (180 aa).

T5 is a catalytic residue. Na(+) contacts are provided by G165, C168, and T171.

This sequence belongs to the peptidase T1B family. HslV subfamily. In terms of assembly, a double ring-shaped homohexamer of HslV is capped on each side by a ring-shaped HslU homohexamer. The assembly of the HslU/HslV complex is dependent on binding of ATP.

It localises to the cytoplasm. The enzyme catalyses ATP-dependent cleavage of peptide bonds with broad specificity.. Allosterically activated by HslU binding. Protease subunit of a proteasome-like degradation complex believed to be a general protein degrading machinery. This is ATP-dependent protease subunit HslV from Helicobacter hepaticus (strain ATCC 51449 / 3B1).